The sequence spans 97 residues: Sec-independent protein translocase protein TatA (97 aa).

A helical membrane pass occupies residues 1–21 (MGFNIWSLLIILLIVALLFGT). The disordered stretch occupies residues 28–97 (GGDLGGAIRG…SAEHHDRSTS (70 aa)). The span at 37–56 (GFKESMREGEEEEAQKRADG) shows a compositional bias: basic and acidic residues. Over residues 78–87 (QARESSSARQ) the composition is skewed to low complexity. A compositionally biased stretch (basic and acidic residues) spans 88 to 97 (SAEHHDRSTS).

It belongs to the TatA/E family. The Tat system comprises two distinct complexes: a TatABC complex, containing multiple copies of TatA, TatB and TatC subunits, and a separate TatA complex, containing only TatA subunits. Substrates initially bind to the TatABC complex, which probably triggers association of the separate TatA complex to form the active translocon.

The protein localises to the cell inner membrane. Part of the twin-arginine translocation (Tat) system that transports large folded proteins containing a characteristic twin-arginine motif in their signal peptide across membranes. TatA could form the protein-conducting channel of the Tat system. This chain is Sec-independent protein translocase protein TatA, found in Halorhodospira halophila (strain DSM 244 / SL1) (Ectothiorhodospira halophila (strain DSM 244 / SL1)).